Here is a 464-residue protein sequence, read N- to C-terminus: Glycosyl hydrolase family 109 protein 1 (464 aa).

The signal sequence occupies residues 1–16; the sequence is MFKHLNALFIGLALFA. Residue Cys17 is the site of N-palmitoyl cysteine attachment. Residue Cys17 is the site of S-diacylglycerol cysteine attachment. NAD(+)-binding positions include 63–64, Asp85, 134–137, 154–155, and Asn183; these read MR, WKHH, and EV. Substrate-binding positions include Tyr212, Arg228, 240–243, and Tyr318; that span reads YATH. Tyr240 contacts NAD(+).

The protein belongs to the Gfo/Idh/MocA family. Glycosyl hydrolase 109 subfamily. The cofactor is NAD(+).

It localises to the cell membrane. Its function is as follows. Glycosidase. Has no alpha-N-acetylgalactosaminidase activity. This is Glycosyl hydrolase family 109 protein 1 from Bacteroides fragilis (strain ATCC 25285 / DSM 2151 / CCUG 4856 / JCM 11019 / LMG 10263 / NCTC 9343 / Onslow / VPI 2553 / EN-2).